The following is a 565-amino-acid chain: Bifunctional dihydrofolate reductase-thymidylate synthase 2 (565 aa).

The region spanning 65–242 (TYQVVVAATK…LRFSFTTHVR (178 aa)) is the DHFR domain. A substrate-binding site is contributed by valine 69. Residues alanine 71 and 77–83 (GIGKDGK) contribute to the NADP(+) site. Substrate is bound at residue aspartate 91. Residues 115-117 (RKT) and 136-139 (LSRS) each bind NADP(+). Isoleucine 178 contributes to the substrate binding site. An NADP(+)-binding site is contributed by 179 to 186 (GGGDILRE). A substrate-binding site is contributed by threonine 199. Positions 245-280 (SSSAGEASDESDGSKVLQVDWKKFSSVLPKMIFDRH) are hinge. Positions 281 to 565 (EEYLYLNLVK…HKKIDMKMAV (285 aa)) are thymidylate synthase. Arginine 302 is a dUMP binding site. Cysteine 447 is an active-site residue. Residues histidine 448, 466–470 (QRSAD), asparagine 478, and 508–510 (HVY) contribute to the dUMP site.

The protein in the N-terminal section; belongs to the dihydrofolate reductase family. In the C-terminal section; belongs to the thymidylate synthase family. Heterodimer or homodimer.

The enzyme catalyses (6S)-5,6,7,8-tetrahydrofolate + NADP(+) = 7,8-dihydrofolate + NADPH + H(+). The catalysed reaction is dUMP + (6R)-5,10-methylene-5,6,7,8-tetrahydrofolate = 7,8-dihydrofolate + dTMP. Its pathway is cofactor biosynthesis; tetrahydrofolate biosynthesis; 5,6,7,8-tetrahydrofolate from 7,8-dihydrofolate: step 1/1. Its function is as follows. Bifunctional enzyme. Involved in de novo dTMP biosynthesis. Key enzyme in folate metabolism. Can play two different roles depending on the source of dihydrofolate: de novo synthesis of tetrahydrofolate or recycling of the dihydrofolate released as one of the end products of the TS catalyzed reaction. Catalyzes an essential reaction for de novo glycine and purine synthesis, DNA precursor synthesis, and for the conversion of dUMP to dTMP. This Arabidopsis thaliana (Mouse-ear cress) protein is Bifunctional dihydrofolate reductase-thymidylate synthase 2 (THY-2).